Reading from the N-terminus, the 228-residue chain is Ribose-5-phosphate isomerase A (228 aa).

Substrate contacts are provided by residues 31 to 34, 85 to 88, and 97 to 100; these read TGST, DGAD, and KGGG. Glu106 (proton acceptor) is an active-site residue. Lys124 provides a ligand contact to substrate.

The protein belongs to the ribose 5-phosphate isomerase family. Homodimer.

The catalysed reaction is aldehydo-D-ribose 5-phosphate = D-ribulose 5-phosphate. The protein operates within carbohydrate degradation; pentose phosphate pathway; D-ribose 5-phosphate from D-ribulose 5-phosphate (non-oxidative stage): step 1/1. In terms of biological role, catalyzes the reversible conversion of ribose-5-phosphate to ribulose 5-phosphate. This is Ribose-5-phosphate isomerase A from Haloarcula marismortui (strain ATCC 43049 / DSM 3752 / JCM 8966 / VKM B-1809) (Halobacterium marismortui).